We begin with the raw amino-acid sequence, 195 residues long: uncharacterized protein (195 aa).

This is an uncharacterized protein from Schizosaccharomyces pombe (strain 972 / ATCC 24843) (Fission yeast).